The primary structure comprises 198 residues: Recombination protein RecR (198 aa).

A C4-type zinc finger spans residues 57–72; sequence CSVCGHITDQDPCYIC. Residues 80-175 form the Toprim domain; sequence SVICVVQDPK…KLSRIAHGLP (96 aa).

It belongs to the RecR family.

Its function is as follows. May play a role in DNA repair. It seems to be involved in an RecBC-independent recombinational process of DNA repair. It may act with RecF and RecO. This chain is Recombination protein RecR, found in Bacillus licheniformis (strain ATCC 14580 / DSM 13 / JCM 2505 / CCUG 7422 / NBRC 12200 / NCIMB 9375 / NCTC 10341 / NRRL NRS-1264 / Gibson 46).